An 84-amino-acid polypeptide reads, in one-letter code: Sporulation-specific transcription factor SpoVIF (84 aa).

The protein resides in the cytoplasm. Its function is as follows. Transcription factor involved in spore coat assembly and spore resistance. Required for gene regulation during the latter stages of sporulation. Regulates the transcription of at least cgeA, cotG and cotS. May directly or indirectly control the function of the GerE protein. The sequence is that of Sporulation-specific transcription factor SpoVIF from Bacillus subtilis (strain 168).